The following is a 122-amino-acid chain: UPF0102 protein CTC_01256 (122 aa).

This sequence belongs to the UPF0102 family.

The sequence is that of UPF0102 protein CTC_01256 from Clostridium tetani (strain Massachusetts / E88).